The chain runs to 1024 residues: Beta-galactosidase (1024 aa).

Residues asparagine 103 and aspartate 202 each coordinate substrate. Aspartate 202 is a binding site for Na(+). Residues glutamate 417, histidine 419, and glutamate 462 each contribute to the Mg(2+) site. Residues glutamate 462 and 538 to 541 (EYAH) each bind substrate. Glutamate 462 functions as the Proton donor in the catalytic mechanism. Glutamate 538 (nucleophile) is an active-site residue. Mg(2+) is bound at residue asparagine 598. The Na(+) site is built by phenylalanine 602 and asparagine 605. Positions 605 and 1000 each coordinate substrate.

The protein belongs to the glycosyl hydrolase 2 family. As to quaternary structure, homotetramer. Mg(2+) is required as a cofactor. Requires Na(+) as cofactor.

It carries out the reaction Hydrolysis of terminal non-reducing beta-D-galactose residues in beta-D-galactosides.. The sequence is that of Beta-galactosidase from Escherichia coli O9:H4 (strain HS).